The primary structure comprises 371 residues: MRALSVFVALFSFLALSSASPGQDVAKRVTSGSLQQVTNFGSNPSGTLMYIYVPNNLATKPGIVVAIHYCTGTAQAYYTGSPYAQLAEKYGFIVIYPQSPYSGTCWDVSSQSALTHNGGGDSNSIANMVTWTISQYNADTSKVFVTGSSSGAMMTNVMAATYPELFAAATVYSGVPAGCFYSSSNQVNGWNSSCAQGNVISTPEVWGGIAKAMYPGYTGPRPRMQIYHGSVDTTLYPQNYYETCKQWAGVFGYNYNSPQSTQSNTPQANYQTTIWGPNLQGIFATGVGHTVPIHGEQDMEWFGFTGGSSSTTTTATTPPTTSTTTSSGGSSTSTGVAEHWGQCGGNGWTGPTACASGYTCTVINEWYSQCL.

The first 19 residues, 1-19, serve as a signal peptide directing secretion; it reads MRALSVFVALFSFLALSSA. The tract at residues 32–304 is catalytic; that stretch reads GSLQQVTNFG…GEQDMEWFGF (273 aa). The active-site Charge relay system is serine 149. An N-linked (GlcNAc...) asparagine glycan is attached at asparagine 191. Residues 305–335 form a disordered region; the sequence is TGGSSSTTTTATTPPTTSTTTSSGGSSTSTG. The ser/Thr-rich linker stretch occupies residues 305–336; the sequence is TGGSSSTTTTATTPPTTSTTTSSGGSSTSTGV. Over residues 307–335 the composition is skewed to low complexity; that stretch reads GSSSTTTTATTPPTTSTTTSSGGSSTSTG. One can recognise a CBM1 domain in the interval 335 to 371; that stretch reads GVAEHWGQCGGNGWTGPTACASGYTCTVINEWYSQCL.

Belongs to the carbohydrate esterase 1 (CE1) family. AxeA subfamily. In terms of assembly, monomer.

It localises to the secreted. It carries out the reaction Deacetylation of xylans and xylo-oligosaccharides.. Its pathway is glycan degradation; xylan degradation. Acetylxylan esterase involved in the hydrolysis of xylan, a major structural heterogeneous polysaccharide found in plant biomass representing the second most abundant polysaccharide in the biosphere, after cellulose. Degrades acetylated xylans by cleaving acetyl side groups from the hetero-xylan backbone. This chain is Probable acetylxylan esterase A (axeA), found in Aspergillus fumigatus (strain ATCC MYA-4609 / CBS 101355 / FGSC A1100 / Af293) (Neosartorya fumigata).